A 337-amino-acid polypeptide reads, in one-letter code: MQVYYDKDADLSLIKGKTVAIIGYGSQGHAHAANLKDSGVNVVIGLRQGSSWKKAEAAGHVVKTVAEATKEADVVMLLLPDETMPAVYHAEVAANLKEGATLAFAHGFNVHYNQIVPRADLDVIMVAPKGPGHTVRSEYKRGGGVPSLIAVYQDNSGKAKDIALSYAAANGGTKGGVIETTFREETETDLFGEQAVLCGGVVELIKAGFETLTEAGYAPEMAYFECLHEMKLIVDLIFEGGIANMNYSISNNAEYGEYVTGPEVVNASSKEAMRNALKRIQTGEYAKMFIQEGNVNYASMTARRRLNADHQVEKVGAQLRAMMPWITANKLVDQDKN.

The KARI N-terminal Rossmann domain maps to 1-180; it reads MQVYYDKDAD…GGTKGGVIET (180 aa). NADP(+) contacts are provided by residues 24-27, Arg47, and Ser51; that span reads YGSQ. Residue His106 is part of the active site. Residue Gly132 participates in NADP(+) binding. A KARI C-terminal knotted domain is found at 181–326; sequence TFREETETDL…AQLRAMMPWI (146 aa). Positions 189, 193, 225, and 229 each coordinate Mg(2+). Ser250 is a binding site for substrate.

This sequence belongs to the ketol-acid reductoisomerase family. The cofactor is Mg(2+).

The catalysed reaction is (2R)-2,3-dihydroxy-3-methylbutanoate + NADP(+) = (2S)-2-acetolactate + NADPH + H(+). It carries out the reaction (2R,3R)-2,3-dihydroxy-3-methylpentanoate + NADP(+) = (S)-2-ethyl-2-hydroxy-3-oxobutanoate + NADPH + H(+). The protein operates within amino-acid biosynthesis; L-isoleucine biosynthesis; L-isoleucine from 2-oxobutanoate: step 2/4. Its pathway is amino-acid biosynthesis; L-valine biosynthesis; L-valine from pyruvate: step 2/4. In terms of biological role, involved in the biosynthesis of branched-chain amino acids (BCAA). Catalyzes an alkyl-migration followed by a ketol-acid reduction of (S)-2-acetolactate (S2AL) to yield (R)-2,3-dihydroxy-isovalerate. In the isomerase reaction, S2AL is rearranged via a Mg-dependent methyl migration to produce 3-hydroxy-3-methyl-2-ketobutyrate (HMKB). In the reductase reaction, this 2-ketoacid undergoes a metal-dependent reduction by NADPH to yield (R)-2,3-dihydroxy-isovalerate. This is Ketol-acid reductoisomerase (NADP(+)) from Neisseria meningitidis serogroup A / serotype 4A (strain DSM 15465 / Z2491).